Consider the following 307-residue polypeptide: tRNA pseudouridine synthase B (307 aa).

Catalysis depends on aspartate 38, which acts as the Nucleophile.

This sequence belongs to the pseudouridine synthase TruB family. Type 1 subfamily.

The catalysed reaction is uridine(55) in tRNA = pseudouridine(55) in tRNA. Responsible for synthesis of pseudouridine from uracil-55 in the psi GC loop of transfer RNAs. The chain is tRNA pseudouridine synthase B from Bacillus cereus (strain ATCC 10987 / NRS 248).